A 280-amino-acid polypeptide reads, in one-letter code: Nucleotide-binding protein CV_3336 (280 aa).

Residue 8–15 (GLSGSGKS) participates in ATP binding. Residue 57 to 60 (DTRS) participates in GTP binding.

Belongs to the RapZ-like family.

In terms of biological role, displays ATPase and GTPase activities. The polypeptide is Nucleotide-binding protein CV_3336 (Chromobacterium violaceum (strain ATCC 12472 / DSM 30191 / JCM 1249 / CCUG 213 / NBRC 12614 / NCIMB 9131 / NCTC 9757 / MK)).